Consider the following 143-residue polypeptide: Transcriptional regulator MraZ (143 aa).

2 SpoVT-AbrB domains span residues 5-47 (EYQH…PQDE) and 76-119 (ATEC…SKER).

This sequence belongs to the MraZ family. As to quaternary structure, forms oligomers.

It localises to the cytoplasm. Its subcellular location is the nucleoid. The protein is Transcriptional regulator MraZ of Brevibacillus brevis (strain 47 / JCM 6285 / NBRC 100599).